The chain runs to 433 residues: Homoserine dehydrogenase (433 aa).

Residues Thr-13 and Val-14 each contribute to the NADPH site. Residues Val-14 and Val-33 each coordinate NAD(+). Val-14 contacts NADP(+). Residues Lys-45 and Lys-105 each contribute to the NADPH site. NADP(+)-binding residues include Lys-45 and Lys-105. Residues Glu-129, Val-132, Gly-134, and Ile-136 each contribute to the Na(+) site. NADP(+)-binding residues include Gly-187 and Glu-190. Residues Glu-190 and Asp-201 each coordinate L-homoserine. Lys-205 (proton donor) is an active-site residue. Gly-302 contributes to the NADPH binding site. Residue Gly-302 coordinates NAD(+). Gly-302 is a binding site for NADP(+). The ACT domain occupies 350–426 (FLRIHVKDEV…VVQEVKSTYR (77 aa)).

The protein belongs to the homoserine dehydrogenase family. In terms of assembly, homotetramer. The cofactor is a metal cation.

It localises to the cytoplasm. Its subcellular location is the secreted. The enzyme catalyses L-homoserine + NADP(+) = L-aspartate 4-semialdehyde + NADPH + H(+). The protein operates within amino-acid biosynthesis; L-methionine biosynthesis via de novo pathway; L-homoserine from L-aspartate: step 3/3. Its pathway is amino-acid biosynthesis; L-threonine biosynthesis; L-threonine from L-aspartate: step 3/5. With respect to regulation, feedback inhibition by threonine. Activated by sodium ions. In terms of biological role, catalyzes the conversion of L-aspartate-beta-semialdehyde (L-Asa) to L-homoserine (L-Hse), the third step in the biosynthesis of threonine and methionine from aspartate. Utilizes NADPH but not NADH as coenzyme. The protein is Homoserine dehydrogenase (hom) of Bacillus subtilis (strain 168).